Reading from the N-terminus, the 278-residue chain is Cytoplasmic envelopment protein 1 (278 aa).

Belongs to the herpesviridae cytoplasmic envelopment protein 1 family. In terms of assembly, interacts with BSRF1 tegument protein; the BBRF2-BSRF1 complexes oligomerize and might play a role in tethering the viral nucleocapsids to the host Golgi membrane during secondary envelopment.

It is found in the virion. It localises to the virion tegument. The protein resides in the host cytoplasm. The protein localises to the host Golgi apparatus. Plays a critical role in cytoplasmic virus egress. Participates in the final step of tegumentation and envelope acquisition within the host cytoplasm. This Homo sapiens (Human) protein is Cytoplasmic envelopment protein 1.